Consider the following 274-residue polypeptide: Aspartate/glutamate leucyltransferase (274 aa).

Belongs to the R-transferase family. Bpt subfamily.

The protein localises to the cytoplasm. It catalyses the reaction N-terminal L-glutamyl-[protein] + L-leucyl-tRNA(Leu) = N-terminal L-leucyl-L-glutamyl-[protein] + tRNA(Leu) + H(+). The catalysed reaction is N-terminal L-aspartyl-[protein] + L-leucyl-tRNA(Leu) = N-terminal L-leucyl-L-aspartyl-[protein] + tRNA(Leu) + H(+). Functions in the N-end rule pathway of protein degradation where it conjugates Leu from its aminoacyl-tRNA to the N-termini of proteins containing an N-terminal aspartate or glutamate. In Ruegeria sp. (strain TM1040) (Silicibacter sp.), this protein is Aspartate/glutamate leucyltransferase.